Reading from the N-terminus, the 31-residue chain is Superoxide dismutase [Cu-Zn] (31 aa).

The protein belongs to the Cu-Zn superoxide dismutase family. Requires Cu cation as cofactor. The cofactor is Zn(2+).

Its subcellular location is the cytoplasm. The enzyme catalyses 2 superoxide + 2 H(+) = H2O2 + O2. In terms of biological role, destroys radicals which are normally produced within the cells and which are toxic to biological systems. This Striga hermonthica (Purple witchweed) protein is Superoxide dismutase [Cu-Zn].